A 563-amino-acid polypeptide reads, in one-letter code: Serine palmitoyltransferase 3 (563 aa).

Residues 1 to 29 (MANLNDSAVTNGTLHNPKTQQGKRQSTGC) are compositionally biased toward polar residues. Residues 1–32 (MANLNDSAVTNGTLHNPKTQQGKRQSTGCVKN) are disordered. Residues 59–79 (PLYVYVLTYMGYGIGILFGYL) traverse the membrane as a helical segment. Lys-371 is modified (N6-(pyridoxal phosphate)lysine).

The protein belongs to the class-II pyridoxal-phosphate-dependent aminotransferase family. In terms of assembly, component of the serine palmitoyltransferase (SPT) complex, which is composed of SPTLC1, SPTLC2 or SPTLC3 and SPTSSA or SPTSSB. The heterodimer consisting of SPTLC1 and SPTLC2/SPTLC3 forms the catalytic core of the enzyme, while SPTSSA or SPTSSB subunits determine substrate specificity. SPT also interacts with ORMDL proteins, especially ORMDL3, which negatively regulate SPT activity in the presence of ceramides. Requires pyridoxal 5'-phosphate as cofactor. Expressed in white and brown adipose tissues.

Its subcellular location is the endoplasmic reticulum membrane. The catalysed reaction is L-serine + hexadecanoyl-CoA + H(+) = 3-oxosphinganine + CO2 + CoA. It catalyses the reaction dodecanoyl-CoA + L-serine + H(+) = 3-oxotetradecasphinganine + CO2 + CoA. It carries out the reaction tetradecanoyl-CoA + L-serine + H(+) = 3-oxohexadecasphinganine + CO2 + CoA. The enzyme catalyses octadecanoyl-CoA + L-serine + H(+) = 3-oxoeicosasphinganine + CO2 + CoA. It participates in lipid metabolism; sphingolipid metabolism. Its activity is regulated as follows. SPT complex catalytic activity is negatively regulated by ORMDL proteins, including ORMDL3, in the presence of ceramides. This mechanism allows to maintain ceramide levels at sufficient concentrations for the production of complex sphingolipids, but which prevents the accumulation of ceramides to levels that trigger apoptosis. Component of the serine palmitoyltransferase multisubunit enzyme (SPT) that catalyzes the initial and rate-limiting step in sphingolipid biosynthesis by condensing L-serine and activated acyl-CoA (most commonly palmitoyl-CoA) to form long-chain bases. The SPT complex is composed of SPTLC1, SPTLC2 or SPTLC3 and SPTSSA or SPTSSB. Within this complex, the heterodimer consisting of SPTLC1 and SPTLC2/SPTLC3 forms the catalytic core. The composition of the serine palmitoyltransferase (SPT) complex determines the substrate preference. The SPTLC1-SPTLC2-SPTSSA complex shows a strong preference for C16-CoA substrate, while the SPTLC1-SPTLC3-SPTSSA isozyme uses both C14-CoA and C16-CoA as substrates, with a slight preference for C14-CoA. The SPTLC1-SPTLC2-SPTSSB complex shows a strong preference for C18-CoA substrate, while the SPTLC1-SPTLC3-SPTSSB isozyme displays an ability to use a broader range of acyl-CoAs, without apparent preference. The chain is Serine palmitoyltransferase 3 from Mus musculus (Mouse).